The primary structure comprises 173 residues: Ribosome maturation factor RimP (173 aa).

The protein belongs to the RimP family.

The protein localises to the cytoplasm. Its function is as follows. Required for maturation of 30S ribosomal subunits. This chain is Ribosome maturation factor RimP, found in Chlorobium phaeobacteroides (strain DSM 266 / SMG 266 / 2430).